The primary structure comprises 90 residues: Protein RALF-like 3 (90 aa).

The N-terminal stretch at 1 to 29 (MSNLRGTNRFILVAVLVSFVFLSIMNAEA) is a signal peptide. Disulfide bonds link cysteine 59-cysteine 67 and cysteine 80-cysteine 86.

This sequence belongs to the plant rapid alkalinization factor (RALF) family.

Its subcellular location is the secreted. In terms of biological role, cell signaling peptide that may regulate plant stress, growth, and development. Mediates a rapid alkalinization of extracellular space by mediating a transient increase in the cytoplasmic Ca(2+) concentration leading to a calcium-dependent signaling events through a cell surface receptor and a concomitant activation of some intracellular mitogen-activated protein kinases. The polypeptide is Protein RALF-like 3 (RALFL3) (Arabidopsis thaliana (Mouse-ear cress)).